Reading from the N-terminus, the 118-residue chain is Large ribosomal subunit protein bL17 (118 aa).

It belongs to the bacterial ribosomal protein bL17 family. Part of the 50S ribosomal subunit. Contacts protein L32.

The sequence is that of Large ribosomal subunit protein bL17 from Onion yellows phytoplasma (strain OY-M).